A 189-amino-acid chain; its full sequence is NADH-quinone oxidoreductase subunit B (189 aa).

[4Fe-4S] cluster contacts are provided by cysteine 39, cysteine 40, cysteine 104, and cysteine 135.

The protein belongs to the complex I 20 kDa subunit family. NDH-1 is composed of 14 different subunits. Subunits NuoB, C, D, E, F, and G constitute the peripheral sector of the complex. Requires [4Fe-4S] cluster as cofactor.

It is found in the cell inner membrane. It catalyses the reaction a quinone + NADH + 5 H(+)(in) = a quinol + NAD(+) + 4 H(+)(out). Functionally, NDH-1 shuttles electrons from NADH, via FMN and iron-sulfur (Fe-S) centers, to quinones in the respiratory chain. The immediate electron acceptor for the enzyme in this species is believed to be a menaquinone. Couples the redox reaction to proton translocation (for every two electrons transferred, four hydrogen ions are translocated across the cytoplasmic membrane), and thus conserves the redox energy in a proton gradient. In Pelodictyon phaeoclathratiforme (strain DSM 5477 / BU-1), this protein is NADH-quinone oxidoreductase subunit B.